A 62-amino-acid chain; its full sequence is MARKCVITGRKSRSGNSRSHAMNASKRTWGANVQKVRILVNGKPKKVYVSARALKSGKVERV.

Residues methionine 1 to threonine 28 form a disordered region. Positions serine 14–lysine 26 are enriched in polar residues.

This sequence belongs to the bacterial ribosomal protein bL28 family.

This Bacillus licheniformis (strain ATCC 14580 / DSM 13 / JCM 2505 / CCUG 7422 / NBRC 12200 / NCIMB 9375 / NCTC 10341 / NRRL NRS-1264 / Gibson 46) protein is Large ribosomal subunit protein bL28.